We begin with the raw amino-acid sequence, 221 residues long: Deoxyribose-phosphate aldolase (221 aa).

The active-site Proton donor/acceptor is Asp90. The active-site Schiff-base intermediate with acetaldehyde is the Lys152. The active-site Proton donor/acceptor is Lys181.

This sequence belongs to the DeoC/FbaB aldolase family. DeoC type 1 subfamily.

It is found in the cytoplasm. The catalysed reaction is 2-deoxy-D-ribose 5-phosphate = D-glyceraldehyde 3-phosphate + acetaldehyde. It functions in the pathway carbohydrate degradation; 2-deoxy-D-ribose 1-phosphate degradation; D-glyceraldehyde 3-phosphate and acetaldehyde from 2-deoxy-alpha-D-ribose 1-phosphate: step 2/2. In terms of biological role, catalyzes a reversible aldol reaction between acetaldehyde and D-glyceraldehyde 3-phosphate to generate 2-deoxy-D-ribose 5-phosphate. The polypeptide is Deoxyribose-phosphate aldolase (Exiguobacterium sp. (strain ATCC BAA-1283 / AT1b)).